The primary structure comprises 550 residues: Chaperonin GroEL (550 aa).

ATP-binding positions include 30–33 (TLGP), K51, 87–91 (DGTTT), G414, and D494.

This sequence belongs to the chaperonin (HSP60) family. As to quaternary structure, forms a cylinder of 14 subunits composed of two heptameric rings stacked back-to-back. Interacts with the co-chaperonin GroES.

The protein resides in the cytoplasm. The enzyme catalyses ATP + H2O + a folded polypeptide = ADP + phosphate + an unfolded polypeptide.. Together with its co-chaperonin GroES, plays an essential role in assisting protein folding. The GroEL-GroES system forms a nano-cage that allows encapsulation of the non-native substrate proteins and provides a physical environment optimized to promote and accelerate protein folding. This Buchnera aphidicola subsp. Thelaxes suberi protein is Chaperonin GroEL.